Consider the following 86-residue polypeptide: Cell division topological specificity factor (86 aa).

This sequence belongs to the MinE family.

Functionally, prevents the cell division inhibition by proteins MinC and MinD at internal division sites while permitting inhibition at polar sites. This ensures cell division at the proper site by restricting the formation of a division septum at the midpoint of the long axis of the cell. The sequence is that of Cell division topological specificity factor from Shewanella frigidimarina (strain NCIMB 400).